The following is a 92-amino-acid chain: Neurophysin 2 (92 aa).

7 cysteine pairs are disulfide-bonded: Cys-10-Cys-54, Cys-13-Cys-27, Cys-21-Cys-44, Cys-28-Cys-34, Cys-61-Cys-73, Cys-67-Cys-85, and Cys-74-Cys-79.

The protein belongs to the vasopressin/oxytocin family. In terms of assembly, there is an equilibrium between the monomeric and dimeric forms. On peptide binding the dimeric form predominates. Post-translationally, a shorter neurophysin molecule (1-90) also exists and is probably derived from the complete protein by proteolytic degradation (in vivo or after extraction).

Its subcellular location is the secreted. Functionally, neurophysin 2 specifically binds vasopressin. The chain is Neurophysin 2 (AVP) from Loxodonta africana (African elephant).